Reading from the N-terminus, the 71-residue chain is Large ribosomal subunit protein bL31 (71 aa).

The Zn(2+) site is built by Cys16, Cys18, Cys37, and Cys40.

It belongs to the bacterial ribosomal protein bL31 family. Type A subfamily. In terms of assembly, part of the 50S ribosomal subunit. Requires Zn(2+) as cofactor.

Its function is as follows. Binds the 23S rRNA. The sequence is that of Large ribosomal subunit protein bL31 from Pseudomonas putida (strain W619).